The following is a 334-amino-acid chain: Glucokinase-like protein PD_0680 (334 aa).

Residue 18–23 (ADVGGT) coordinates ATP.

Belongs to the bacterial glucokinase family.

The polypeptide is Glucokinase-like protein PD_0680 (Xylella fastidiosa (strain Temecula1 / ATCC 700964)).